A 153-amino-acid chain; its full sequence is Nucleoside diphosphate kinase (153 aa).

ATP contacts are provided by Lys-11, Phe-59, Arg-87, Thr-93, Arg-104, and Asn-114. Residue His-117 is the Pros-phosphohistidine intermediate of the active site.

This sequence belongs to the NDK family. As to quaternary structure, homotrimer. Mg(2+) serves as cofactor.

The enzyme catalyses a 2'-deoxyribonucleoside 5'-diphosphate + ATP = a 2'-deoxyribonucleoside 5'-triphosphate + ADP. The catalysed reaction is a ribonucleoside 5'-diphosphate + ATP = a ribonucleoside 5'-triphosphate + ADP. Major role in the synthesis of nucleoside triphosphates other than ATP. The ATP gamma phosphate is transferred to the NDP beta phosphate via a ping-pong mechanism, using a phosphorylated active-site intermediate. The chain is Nucleoside diphosphate kinase (ndk1) from Aspergillus fumigatus (strain ATCC MYA-4609 / CBS 101355 / FGSC A1100 / Af293) (Neosartorya fumigata).